A 503-amino-acid chain; its full sequence is Sugar phosphate exchanger 3 (503 aa).

The chain crosses the membrane as a helical span at residues 20–40 (YTHHHLAAFLLTFFSYSLLHA). N-linked (GlcNAc...) asparagine glycosylation is found at N62 and N71. The next 5 membrane-spanning stretches (helical) occupy residues 87 to 107 (TLFL…GLFI), 119 to 139 (LVLT…GTLT), 152 to 172 (LVWI…VAIM), 183 to 203 (FVFG…AFLA), and 214 to 234 (AFLV…FGLV). Residue N275 is glycosylated (N-linked (GlcNAc...) asparagine). The next 6 helical transmembrane spans lie at 300–322 (GVLL…FFWL), 342–362 (IWYD…SDLM), 367–387 (PVLT…SHSP), 395–415 (FIMS…SSAI), 437–457 (GIVD…VPLI), and 466–486 (VFYF…PLIV).

This sequence belongs to the major facilitator superfamily. Organophosphate:Pi antiporter (OPA) (TC 2.A.1.4) family.

Its subcellular location is the endoplasmic reticulum membrane. It localises to the lysosome membrane. Its function is as follows. Unlike the other SLC37 members, seems to lack glucose-6-phosphate antiporter activity. The protein is Sugar phosphate exchanger 3 (slc37a3) of Xenopus laevis (African clawed frog).